A 666-amino-acid polypeptide reads, in one-letter code: UvrABC system protein B (666 aa).

One can recognise a Helicase ATP-binding domain in the interval D26–T414. G39–T46 contacts ATP. The Beta-hairpin motif lies at Y92–I115. In terms of domain architecture, Helicase C-terminal spans Q429 to V591. A UVR domain is found at E625–E660.

The protein belongs to the UvrB family. As to quaternary structure, forms a heterotetramer with UvrA during the search for lesions. Interacts with UvrC in an incision complex.

Its subcellular location is the cytoplasm. In terms of biological role, the UvrABC repair system catalyzes the recognition and processing of DNA lesions. A damage recognition complex composed of 2 UvrA and 2 UvrB subunits scans DNA for abnormalities. Upon binding of the UvrA(2)B(2) complex to a putative damaged site, the DNA wraps around one UvrB monomer. DNA wrap is dependent on ATP binding by UvrB and probably causes local melting of the DNA helix, facilitating insertion of UvrB beta-hairpin between the DNA strands. Then UvrB probes one DNA strand for the presence of a lesion. If a lesion is found the UvrA subunits dissociate and the UvrB-DNA preincision complex is formed. This complex is subsequently bound by UvrC and the second UvrB is released. If no lesion is found, the DNA wraps around the other UvrB subunit that will check the other stand for damage. The polypeptide is UvrABC system protein B (Leptospira interrogans serogroup Icterohaemorrhagiae serovar copenhageni (strain Fiocruz L1-130)).